The chain runs to 455 residues: Beta-cyclopiazonate dehydrogenase (455 aa).

The first 20 residues, 1 to 20 (MATRIASFIGISTVASLALA), serve as a signal peptide directing secretion.

This sequence belongs to the beta-cyclopiazonate dehydrogenase family. FAD is required as a cofactor.

It catalyses the reaction beta-cyclopiazonate + A = alpha-cyclopiazonate + AH2. In terms of biological role, beta-cyclopiazonate dehydrogenase involved in the synthesis of the fungal neurotoxin alpha-cyclopiazonic acid (CPA). CpaO carries out the dehydrogenation of beta-CPA to yield an unstable enimine product, which is captured by intramolecular cyclization to create the pentacyclic fused scaffold of alpha-cyclopiazonate. In Aspergillus flavus (strain ATCC 200026 / FGSC A1120 / IAM 13836 / NRRL 3357 / JCM 12722 / SRRC 167), this protein is Beta-cyclopiazonate dehydrogenase.